We begin with the raw amino-acid sequence, 263 residues long: Thiazole synthase (263 aa).

Lysine 100 functions as the Schiff-base intermediate with DXP in the catalytic mechanism. Residues glycine 161, alanine 187–glycine 188, and asparagine 209–threonine 210 contribute to the 1-deoxy-D-xylulose 5-phosphate site.

It belongs to the ThiG family. Homotetramer. Forms heterodimers with either ThiH or ThiS.

It localises to the cytoplasm. The catalysed reaction is [ThiS sulfur-carrier protein]-C-terminal-Gly-aminoethanethioate + 2-iminoacetate + 1-deoxy-D-xylulose 5-phosphate = [ThiS sulfur-carrier protein]-C-terminal Gly-Gly + 2-[(2R,5Z)-2-carboxy-4-methylthiazol-5(2H)-ylidene]ethyl phosphate + 2 H2O + H(+). The protein operates within cofactor biosynthesis; thiamine diphosphate biosynthesis. Catalyzes the rearrangement of 1-deoxy-D-xylulose 5-phosphate (DXP) to produce the thiazole phosphate moiety of thiamine. Sulfur is provided by the thiocarboxylate moiety of the carrier protein ThiS. In vitro, sulfur can be provided by H(2)S. The polypeptide is Thiazole synthase (Shouchella clausii (strain KSM-K16) (Alkalihalobacillus clausii)).